The chain runs to 217 residues: Putative thymidylate synthase (217 aa).

Cys139 is an active-site residue.

This sequence belongs to the thymidylate synthase family. Archaeal-type ThyA subfamily. In terms of assembly, monomer.

Its subcellular location is the cytoplasm. Its pathway is pyrimidine metabolism; dTTP biosynthesis. Functionally, may catalyze the biosynthesis of dTMP using an unknown cosubstrate. The polypeptide is Putative thymidylate synthase (Methanococcoides burtonii (strain DSM 6242 / NBRC 107633 / OCM 468 / ACE-M)).